Consider the following 223-residue polypeptide: Cutinase 4 (223 aa).

The N-terminal stretch at 1–26 is a signal peptide; that stretch reads MPLPLLPPLLLPLEALLDLALHLVDS. C60 and C133 are joined by a disulfide. Catalysis depends on S144, which acts as the Nucleophile. C187 and C194 are joined by a disulfide. D191 is an active-site residue. H203 functions as the Proton donor/acceptor in the catalytic mechanism.

This sequence belongs to the cutinase family. The 2 disulfide bonds play a critical role in holding the catalytic residues in juxta-position; reduction of the disulfide bridges results in the complete inactivation of the enzyme.

It localises to the secreted. The enzyme catalyses cutin + H2O = cutin monomers.. Functionally, catalyzes the hydrolysis of complex carboxylic polyesters found in the cell wall of plants. Degrades cutin, a macromolecule that forms the structure of the plant cuticle. Also degrades suberin, a specialized macromolecule found in the cell wall of various plant tissues. The sequence is that of Cutinase 4 from Emericella nidulans (strain FGSC A4 / ATCC 38163 / CBS 112.46 / NRRL 194 / M139) (Aspergillus nidulans).